Consider the following 303-residue polypeptide: N-acetyl-D-glucosamine kinase (303 aa).

Residues 4 to 11 and 133 to 140 each bind ATP; these read GFDIGGTK and GVGGGLVL. Residues His-157, Cys-177, Cys-179, and Cys-184 each contribute to the Zn(2+) site.

It belongs to the ROK (NagC/XylR) family. NagK subfamily.

It carries out the reaction N-acetyl-D-glucosamine + ATP = N-acetyl-D-glucosamine 6-phosphate + ADP + H(+). It participates in cell wall biogenesis; peptidoglycan recycling. In terms of biological role, catalyzes the phosphorylation of N-acetyl-D-glucosamine (GlcNAc) derived from cell-wall degradation, yielding GlcNAc-6-P. This Salmonella arizonae (strain ATCC BAA-731 / CDC346-86 / RSK2980) protein is N-acetyl-D-glucosamine kinase.